The chain runs to 226 residues: Cytidylate kinase (226 aa).

An ATP-binding site is contributed by Gly10–Thr18.

Belongs to the cytidylate kinase family. Type 1 subfamily.

The protein resides in the cytoplasm. The enzyme catalyses CMP + ATP = CDP + ADP. It catalyses the reaction dCMP + ATP = dCDP + ADP. This is Cytidylate kinase from Streptococcus pyogenes serotype M18 (strain MGAS8232).